The following is a 482-amino-acid chain: Chromosome stability protein 9 (482 aa).

Disordered regions lie at residues serine 239–asparagine 263 and serine 418–arginine 482. Residues serine 240–asparagine 249 show a composition bias toward low complexity. Residues glycine 250 to asparagine 263 are compositionally biased toward polar residues. A compositionally biased stretch (low complexity) spans serine 418 to serine 437. 2 stretches are compositionally biased toward polar residues: residues leucine 440–histidine 453 and arginine 463–lysine 473.

Component of the synapsis initiation complex composed of at least ZIP2, ZIP3, MSH4 and MSH5. Also interacts with ZIP1, MRE11, RAD51 and RAD53.

Its subcellular location is the nucleus. It is found in the chromosome. In terms of biological role, component of the synapsis initiation complex (SIC) necessary for the synaptonemal complex assembly. Stabilizes the ZIP2 component to the chromosomes. The SIC complex loads onto chromosomes and nucleates ZIP1 polymerization, a molecular zipper that acts to bring homologous chromosomes in close apposition, which is required for meiotic crossover. May also be involved in double strand break repair. The protein is Chromosome stability protein 9 (CST9) of Saccharomyces cerevisiae (strain ATCC 204508 / S288c) (Baker's yeast).